A 159-amino-acid chain; its full sequence is Transcription elongation factor GreA (159 aa).

A coiled-coil region spans residues S47–E77.

It belongs to the GreA/GreB family.

In terms of biological role, necessary for efficient RNA polymerase transcription elongation past template-encoded arresting sites. The arresting sites in DNA have the property of trapping a certain fraction of elongating RNA polymerases that pass through, resulting in locked ternary complexes. Cleavage of the nascent transcript by cleavage factors such as GreA or GreB allows the resumption of elongation from the new 3'terminus. GreA releases sequences of 2 to 3 nucleotides. The sequence is that of Transcription elongation factor GreA from Metamycoplasma arthritidis (strain 158L3-1) (Mycoplasma arthritidis).